The primary structure comprises 89 residues: Small ribosomal subunit protein uS15 (89 aa).

The protein belongs to the universal ribosomal protein uS15 family. Part of the 30S ribosomal subunit. Forms a bridge to the 50S subunit in the 70S ribosome, contacting the 23S rRNA.

Functionally, one of the primary rRNA binding proteins, it binds directly to 16S rRNA where it helps nucleate assembly of the platform of the 30S subunit by binding and bridging several RNA helices of the 16S rRNA. Forms an intersubunit bridge (bridge B4) with the 23S rRNA of the 50S subunit in the ribosome. This chain is Small ribosomal subunit protein uS15, found in Dictyoglomus thermophilum (strain ATCC 35947 / DSM 3960 / H-6-12).